A 120-amino-acid chain; its full sequence is Large ribosomal subunit protein uL18 (120 aa).

The protein belongs to the universal ribosomal protein uL18 family. Part of the 50S ribosomal subunit; part of the 5S rRNA/L5/L18/L25 subcomplex. Contacts the 5S and 23S rRNAs.

Functionally, this is one of the proteins that bind and probably mediate the attachment of the 5S RNA into the large ribosomal subunit, where it forms part of the central protuberance. This Rhizobium etli (strain CIAT 652) protein is Large ribosomal subunit protein uL18.